A 252-amino-acid polypeptide reads, in one-letter code: Serine/threonine phosphatase stp (252 aa).

Positions methionine 1–aspartate 18 are enriched in basic and acidic residues. Positions methionine 1–phenylalanine 23 are disordered. Positions histidine 2 to arginine 242 constitute a PPM-type phosphatase domain. Aspartate 36, glycine 37, aspartate 194, and aspartate 233 together coordinate Mn(2+).

It belongs to the PP2C family. It depends on Mn(2+) as a cofactor.

Its subcellular location is the cytoplasm. It localises to the membrane. The enzyme catalyses O-phospho-L-seryl-[protein] + H2O = L-seryl-[protein] + phosphate. The catalysed reaction is O-phospho-L-threonyl-[protein] + H2O = L-threonyl-[protein] + phosphate. Protein phosphatase that dephosphorylates EF-Tu. This is Serine/threonine phosphatase stp (stp) from Listeria monocytogenes serotype 4b (strain F2365).